Here is a 672-residue protein sequence, read N- to C-terminus: Glycine--tRNA ligase beta subunit (672 aa).

The protein belongs to the class-II aminoacyl-tRNA synthetase family. As to quaternary structure, tetramer of two alpha and two beta subunits.

The protein resides in the cytoplasm. It carries out the reaction tRNA(Gly) + glycine + ATP = glycyl-tRNA(Gly) + AMP + diphosphate. In Thermotoga sp. (strain RQ2), this protein is Glycine--tRNA ligase beta subunit.